A 357-amino-acid chain; its full sequence is GTPase Obg (357 aa).

Residues 1 to 159 form the Obg domain; it reads MKFVDEAFID…RNLKLELKVL (159 aa). The OBG-type G domain maps to 160-334; that stretch reads ADVGLLGMPN…LVQSIFQHVH (175 aa). Residues 166–173, 191–195, 213–216, 284–287, and 315–317 contribute to the GTP site; these read GMPNAGKS, FTTLH, DIPG, NKLD, and SAL. S173 and T193 together coordinate Mg(2+).

The protein belongs to the TRAFAC class OBG-HflX-like GTPase superfamily. OBG GTPase family. As to quaternary structure, monomer. Mg(2+) is required as a cofactor.

Its subcellular location is the cytoplasm. Its function is as follows. An essential GTPase which binds GTP, GDP and possibly (p)ppGpp with moderate affinity, with high nucleotide exchange rates and a fairly low GTP hydrolysis rate. Plays a role in control of the cell cycle, stress response, ribosome biogenesis and in those bacteria that undergo differentiation, in morphogenesis control. In Acidovorax ebreus (strain TPSY) (Diaphorobacter sp. (strain TPSY)), this protein is GTPase Obg.